The sequence spans 307 residues: Golgi to ER traffic protein 2 (307 aa).

The Cytoplasmic segment spans residues 1–173 (MSDSTDSPAV…QAYDTYQQKL (173 aa)). The segment covering 41 to 52 (LSQGSSVKTTGV) has biased composition (polar residues). Positions 41–73 (LSQGSSVKTTGVKSVLDEPQPTATSSAIHDEDP) are disordered. Residues 174 to 194 (WKSRFLVIRVVVTLFNFFYHY) form a helical membrane-spanning segment. At 195–220 (LNVPSFHASNYSYVRDLAQDEFPVRN) the chain is on the lumenal side. Residues 221–240 (FFTWFAAFEVIIVLQYYTVF) form a helical membrane-spanning segment. Over 241-284 (HKLGLFHAANQNSMIMKLMSMGSMVLPQLNTYQPLVARFLGYYE) the chain is Cytoplasmic. Residues 285–305 (LFGIIFGDLSLVIVLFGLLSF) traverse the membrane as a helical segment. The Lumenal segment spans residues 306 to 307 (TK).

Belongs to the GET2 family. Component of the Golgi to ER traffic (GET) complex, which is composed of GET1, GET2 and GET3. Within the complex, GET1 and GET2 form a heterotetramer which is stabilized by phosphatidylinositol binding and which binds to the GET3 homodimer.

Its subcellular location is the endoplasmic reticulum membrane. The protein resides in the golgi apparatus membrane. Required for the post-translational delivery of tail-anchored (TA) proteins to the endoplasmic reticulum. Together with GET1, acts as a membrane receptor for soluble GET3, which recognizes and selectively binds the transmembrane domain of TA proteins in the cytosol. The GET complex cooperates with the HDEL receptor ERD2 to mediate the ATP-dependent retrieval of resident ER proteins that contain a C-terminal H-D-E-L retention signal from the Golgi to the ER. The polypeptide is Golgi to ER traffic protein 2 (Candida tropicalis (strain ATCC MYA-3404 / T1) (Yeast)).